Here is a 229-residue protein sequence, read N- to C-terminus: MQEIRGVVFDLYGTLCDVHSVAQLCGQYFPERGTEISLMWRQKQLEYSWLRSLMGQYVSFPQATEDALVFVCNALNLKLREDTRIALCNEYLNIKPYREVRSALESLRSGAVPLAILSNGSAHSIQSVVGNAGIEHFFSHLISADEVSVSKPSPAAYELAEKRLKVVRSKLLFVSSNAWDASGARHFGFQVCWVNRSRNTFEQLGERPDHVISGLDELPNLLNFASADR.

The active-site Nucleophile is D10. An (S)-2-haloacid is bound by residues 11 to 12 (LY), R41, and 118 to 119 (SN). Residues 175–180 (SSNAWD) are important for catalytic activity.

The protein belongs to the HAD-like hydrolase superfamily. S-2-haloalkanoic acid dehalogenase family.

The enzyme catalyses an (S)-2-haloacid + H2O = a (2R)-2-hydroxycarboxylate + a halide anion + H(+). It catalyses the reaction (S)-2-chloropropanoate + H2O = (R)-lactate + chloride + H(+). Functionally, catalyzes the hydrolytic dehalogenation of small (S)-2-haloalkanoic acids to yield the corresponding (R)-2-hydroxyalkanoic acids. Acts on acids of short chain lengths, C(2) to C(4), with inversion of configuration at C-2. Active with 2-halogenated carboxylic acids and converts only the S-isomer (or L-isomer) of 2-chloropropionic acid with inversion of configuration to produce R-lactate (or D-isomer). The chain is (S)-2-haloacid dehalogenase 2 from Pseudomonas sp. (strain CBS-3).